Here is a 145-residue protein sequence, read N- to C-terminus: Antimicrobial peptide NK-lysin (145 aa).

Residues 1-22 (MTSRALLLLASALLGTPGLTFS) form the signal peptide. The propeptide occupies 23–62 (GLNPESYDLATAHLSDGEQFCQGLTQEDLQGDLLTERERQ). Residues 62–142 (QGIACWSCRK…VDIKLCKHKA (81 aa)) enclose the Saposin B-type domain. 3 cysteine pairs are disulfide-bonded: Cys-66-Cys-138, Cys-69-Cys-132, and Cys-97-Cys-107. A propeptide spanning residues 141 to 145 (KAGLI) is cleaved from the precursor.

It is found in the secreted. Functionally, may be an effector molecule of cytotoxic activity. Has antimicrobial activity. The sequence is that of Antimicrobial peptide NK-lysin (NKL) from Equus caballus (Horse).